The sequence spans 402 residues: Mannonate dehydratase 1 (402 aa).

This sequence belongs to the mannonate dehydratase family. The cofactor is Fe(2+). Mn(2+) serves as cofactor.

It carries out the reaction D-mannonate = 2-dehydro-3-deoxy-D-gluconate + H2O. It participates in carbohydrate metabolism; pentose and glucuronate interconversion. Catalyzes the dehydration of D-mannonate. This chain is Mannonate dehydratase 1 (uxuA1), found in Agrobacterium fabrum (strain C58 / ATCC 33970) (Agrobacterium tumefaciens (strain C58)).